The following is a 231-amino-acid chain: Endonuclease NucS (231 aa).

It belongs to the NucS endonuclease family.

The protein localises to the cytoplasm. Its function is as follows. Cleaves both 3' and 5' ssDNA extremities of branched DNA structures. The chain is Endonuclease NucS from Beutenbergia cavernae (strain ATCC BAA-8 / DSM 12333 / CCUG 43141 / JCM 11478 / NBRC 16432 / NCIMB 13614 / HKI 0122).